A 275-amino-acid polypeptide reads, in one-letter code: MTKESPIPVVVNGAAGKMGKEVIKAVSQAEDMMLVGAVDLNPKYRGEDAGEVAGCGPVEVPILDDLQSVLVLATQEKVQGVMVDFTHPDGVYDNIRSAIAYGVRPVVGTTGLSGEQIKDLGEFAEKASTGCLIVPNFSIGMILLQQAAVQASQYFDHVEIIELHHNQKADAPSGTAIKTAEMLSELGKSFNPAKVEETETIRGSRGGITEENIHIHSVRLPGFIAHQEVIFGSTGQIYTLRHDTTDRSSFMPGVLLAIRKVTQLKSLIYGLEKIL.

NAD(+)-binding positions include 13–18, 108–110, and 134–137; these read GAAGKM, GTT, and VPNF. H164 functions as the Proton donor/acceptor in the catalytic mechanism. H165 is a binding site for (S)-2,3,4,5-tetrahydrodipicolinate. K168 serves as the catalytic Proton donor. Position 174 to 175 (174 to 175) interacts with (S)-2,3,4,5-tetrahydrodipicolinate; it reads GT.

This sequence belongs to the DapB family.

Its subcellular location is the cytoplasm. The catalysed reaction is (S)-2,3,4,5-tetrahydrodipicolinate + NAD(+) + H2O = (2S,4S)-4-hydroxy-2,3,4,5-tetrahydrodipicolinate + NADH + H(+). It catalyses the reaction (S)-2,3,4,5-tetrahydrodipicolinate + NADP(+) + H2O = (2S,4S)-4-hydroxy-2,3,4,5-tetrahydrodipicolinate + NADPH + H(+). Its pathway is amino-acid biosynthesis; L-lysine biosynthesis via DAP pathway; (S)-tetrahydrodipicolinate from L-aspartate: step 4/4. In terms of biological role, catalyzes the conversion of 4-hydroxy-tetrahydrodipicolinate (HTPA) to tetrahydrodipicolinate. This is 4-hydroxy-tetrahydrodipicolinate reductase from Gloeothece citriformis (strain PCC 7424) (Cyanothece sp. (strain PCC 7424)).